Consider the following 99-residue polypeptide: Aspartyl/glutamyl-tRNA(Asn/Gln) amidotransferase subunit C (99 aa).

Belongs to the GatC family. In terms of assembly, heterotrimer of A, B and C subunits.

It catalyses the reaction L-glutamyl-tRNA(Gln) + L-glutamine + ATP + H2O = L-glutaminyl-tRNA(Gln) + L-glutamate + ADP + phosphate + H(+). It carries out the reaction L-aspartyl-tRNA(Asn) + L-glutamine + ATP + H2O = L-asparaginyl-tRNA(Asn) + L-glutamate + ADP + phosphate + 2 H(+). In terms of biological role, allows the formation of correctly charged Asn-tRNA(Asn) or Gln-tRNA(Gln) through the transamidation of misacylated Asp-tRNA(Asn) or Glu-tRNA(Gln) in organisms which lack either or both of asparaginyl-tRNA or glutaminyl-tRNA synthetases. The reaction takes place in the presence of glutamine and ATP through an activated phospho-Asp-tRNA(Asn) or phospho-Glu-tRNA(Gln). The chain is Aspartyl/glutamyl-tRNA(Asn/Gln) amidotransferase subunit C from Thermobifida fusca (strain YX).